The sequence spans 223 residues: MPCLLVAGLGNPSAKYQNTRHNIGFMVLDFLSKELDFDFSFDKKFNAEVGAINIGPHKVFFLKPQTFMNLSGEAINPFVRYFDITHTFVIHDDIDIGFGDMRFKYGGSSGGHNGLKSIDSFMGDTYFRLRFGVGRSANKNVVEYVLSDFNAQEREQLEGLIAHAKEAVMSFCNMAQYPKEHILTHLQQYFTLKIPKLTPSQTQNNESFATQFSQMQYTRFTQG.

TRNA is bound at residue Y16. H21 acts as the Proton acceptor in catalysis. Residues F67, N69, and N113 each coordinate tRNA.

Belongs to the PTH family. Monomer.

The protein resides in the cytoplasm. It carries out the reaction an N-acyl-L-alpha-aminoacyl-tRNA + H2O = an N-acyl-L-amino acid + a tRNA + H(+). Hydrolyzes ribosome-free peptidyl-tRNAs (with 1 or more amino acids incorporated), which drop off the ribosome during protein synthesis, or as a result of ribosome stalling. In terms of biological role, catalyzes the release of premature peptidyl moieties from peptidyl-tRNA molecules trapped in stalled 50S ribosomal subunits, and thus maintains levels of free tRNAs and 50S ribosomes. The polypeptide is Peptidyl-tRNA hydrolase (Helicobacter hepaticus (strain ATCC 51449 / 3B1)).